The chain runs to 1547 residues: Fatty acid synthase subunit alpha (1547 aa).

The disordered stretch occupies residues 94–121 (TLPEAHPPPPIDSHQEPSTQTQATHRSA). Residues 109–118 (EPSTQTQATH) show a composition bias toward polar residues. In terms of domain architecture, Carrier spans 145–221 (LPVSTIVRSL…ETMSIGHNGR (77 aa)). At Ser-180 the chain carries O-(pantetheine 4'-phosphoryl)serine. The tract at residues 563-798 (GKNVLITGAG…ATLMGGTITT (236 aa)) is ketoreductase (KR) domain. The region spanning 1004–1476 (KESLQEIVLQ…QKGSQAILIH (473 aa)) is the Ketosynthase family 3 (KS3) domain. Residues Cys-1190 and His-1442 each act as for beta-ketoacyl synthase activity in the active site.

Belongs to the thiolase-like superfamily. Fungal fatty acid synthetase subunit alpha family. It depends on pantetheine 4'-phosphate as a cofactor.

It catalyses the reaction acetyl-CoA + n malonyl-CoA + 2n NADPH + 4n H(+) = a long-chain-acyl-CoA + n CoA + n CO2 + 2n NADP(+).. It carries out the reaction a fatty acyl-[ACP] + malonyl-[ACP] + H(+) = a 3-oxoacyl-[ACP] + holo-[ACP] + CO2. The catalysed reaction is a (3R)-hydroxyacyl-[ACP] + NADP(+) = a 3-oxoacyl-[ACP] + NADPH + H(+). It participates in mycotoxin biosynthesis; HC-toxin biosynthesis. Fatty acid synthase alpha subunit, part of the diffuse TOX2 gene cluster that mediates the biosynthesis of the HC-toxin, cyclic tetrapeptide of structure cyclo(D-Pro-L-Ala-D-Ala-L-Aeo), where Aeo stands for 2-amino-9,10-epoxi-8-oxodecanoic acid. HC-toxin is a determinant of specificity and virulence in the interaction between the producing fungus and its host, maize. TOXH contribute to the synthesis of the decanoic backbone of 2-amino-9,10-epoxi-8-oxodecanoic acid, an essential precursor for the production of the major forms of HC-toxin by the non-ribosomal peptide synthetase HTS1. This chain is Fatty acid synthase subunit alpha, found in Cochliobolus carbonum (Maize leaf spot fungus).